A 388-amino-acid chain; its full sequence is Trans-enoyl reductase tenC (388 aa).

51–54 (VDGK) is an NADP(+) binding site. Residue 142-149 (VGVASVGM) coordinates substrate. NADP(+) is bound by residues 219–222 (SSES), tyrosine 237, and 284–285 (LD). 304–308 (SFTQF) is a binding site for substrate. 373-374 (IK) is a binding site for NADP(+).

It belongs to the zinc-containing alcohol dehydrogenase family. As to quaternary structure, monomer.

The protein operates within secondary metabolite biosynthesis. In terms of biological role, trans-enoyl reductase; part of the gene cluster that mediates the biosynthesis of tenellin-type 2-pyridones, iron-chelating compounds involved in iron stress tolerance, competition with the natural competitor fungus Metarhizium robertsii and insect hosts infection. TenC collaborates with the hybrid PKS-NRPS synthetase tenS to catalyze the assembly of the polyketide-amino acid backbone, since tenS lacks a designated enoylreductase (ER) domain. Upon formation of the polyketide backbone on the thiotemplate of tenS, the triketide is transferred to the NRPS module and linked to tyrosine to produce the pyrrolidine-2-dione intermediates, including pretellinin A, 11-hydropretellenin A, 12-hydropretellenin A, 13-hydropretellenin A, 14-hydropretellenin A, 12-oxopretellenin A and prototellinin D. The pathway begins with the assembly of the polyketide-amino acid backbone by the hybrid PKS-NRPS tenS with the help of the enoyl reductase tenC. These enzymes catalyze the synthesis of the pyrrolidine-2-dione intermediates pretellinin A, 11-hydropretellenin A, 12-hydropretellenin A, 13-hydropretellenin A, 14-hydropretellenin A, 12-oxopretellenin A and prototellinin D. The cytochrome P450 monooxygenase tenA then catalyzes an oxidative ring expansion of pretenellin A and 14-hydropretellenin A to form the 2-pyridone core, leading to pretenellin B and pyridovericin, respectively. The cytochrome P450 monooxygenase tenB is then required for the selective N-hydroxylation of the 2-pyridone nitrogen of yield tellinin and 15-hydroxytellenin (15-HT), respectively. The UDP-glucosyltransferase GT1 and the methyltransferase MT1, located outside the tenS gene cluster, contribute to the stepwise glycosylation and methylation of 15-HT to obtain the glycoside pyridovericin-N-O-(4-O-methyl-beta-D-glucopyranoside) (PMGP). Additional related compounds such as 1-O-methyl-15-HT, (8Z)-1-O-methyl-15-HT, and O-methyltenellin A are also produced but the enzymes involved in their biosynthesis have still to be determined. In Beauveria bassiana (White muscardine disease fungus), this protein is Trans-enoyl reductase tenC.